Consider the following 726-residue polypeptide: Pyrroloquinoline quinone-dependent pyranose dehydrogenase (726 aa).

An N-terminal signal peptide occupies residues 1 to 18; that stretch reads MRSSSLAWALGLVALANA. Residues M83 and Y108 each coordinate heme b. Residues C138 and C141 are joined by a disulfide bond. N140 is a glycosylation site (N-linked (GlcNAc...) asparagine). Heme b contacts are provided by R181 and H182. The segment at 211–242 is disordered; the sequence is PPLSGGAPTQPPTQQPPTTTAPPPPPPSSTFV. Residues 219-238 are compositionally biased toward pro residues; that stretch reads TQPPTQQPPTTTAPPPPPPS. Residues C244 and C302 are joined by a disulfide bond. 4 residues coordinate pyrroloquinoline quinone: R273, H363, R430, and N431. Residues S449 and D451 each contribute to the Ca(2+) site. C492 and C525 are joined by a disulfide. H539 is a pyrroloquinoline quinone binding site. N551 carries N-linked (GlcNAc...) asparagine glycosylation. 3 residues coordinate pyrroloquinoline quinone: H560, W563, and N564. C611 and C619 are joined by a disulfide. R621 contributes to the pyrroloquinoline quinone binding site. Positions 659 to 678 are enriched in pro residues; it reads ITQPPITTSPPTPTTPPVVQ. Residues 659–689 form a disordered region; sequence ITQPPITTSPPTPTTPPVVQPPTTVAPPQAS. Residues 679–689 show a composition bias toward low complexity; sequence PPTTVAPPQAS. The region spanning 688-724 is the CBM1 domain; the sequence is ASQTLWGQCGGQGWTGPTLCPANSVCRESNQWYSQCV.

Belongs to the sugar dehydrogenase AA12 family. Requires Ca(2+) as cofactor. It depends on pyrroloquinoline quinone as a cofactor. The cofactor is heme b.

It localises to the secreted. Pyrroloquinoline quinone (PPQ)-dependent oxidoreductase that catalyzes the oxidation of various sugars including L-galactose, L-gulose, D-talose, D-arabinose, D-lyxose, L-fucose and D-glucosone. Shows significant activity toward the reverse-chair conformation of pyranoses. Shows little or no activity toward abundant sugars such as D-glucose, D-fructose, cellobiose, as well L-xylose and L-glucose. This enzyme is able to direct electrical communication with electrodes, without artificial electron mediators, thus allowing direct electron transfer (DET)-type bioelectrocatalysis. Exhibits binding affinity for insoluble cellulose. PDH does not oxidize cello-oligosaccharides but is able to activate the C-1-oxidizing Neurospora crassa LPMO9F and the C-4-oxidizing Neurospora crassa LPMO9C thanks to the electron-tranfer activity of the cytochrome domain and the localization of PDH in the vicinity of the LPMO substrates by the CBM1 domain. In Coprinopsis cinerea (strain Okayama-7 / 130 / ATCC MYA-4618 / FGSC 9003) (Inky cap fungus), this protein is Pyrroloquinoline quinone-dependent pyranose dehydrogenase.